Consider the following 412-residue polypeptide: Inositol polyphosphate-5-phosphatase A (412 aa).

C409 is lipidated: S-farnesyl cysteine. Positions 410-412 (VVQ) are cleaved as a propeptide — removed in mature form.

Belongs to the inositol 1,4,5-trisphosphate 5-phosphatase type I family. As to quaternary structure, interacts with TASOR. In terms of processing, isoprenylation at Cys-409 is required for localization at the membrane. As to expression, expressed at high levels in cerebellar Purkinje cells (at protein level). Expressed in Sertoli cells of the testis.

The protein resides in the cell membrane. It localises to the cell projection. The protein localises to the dendrite. The enzyme catalyses 1D-myo-inositol 1,4,5-trisphosphate + H2O = 1D-myo-inositol 1,4-bisphosphate + phosphate. The catalysed reaction is 1D-myo-inositol 1,3,4,5-tetrakisphosphate + H2O = 1D-myo-inositol 1,3,4-trisphosphate + phosphate. Phosphatase that specifically hydrolyzes the 5-phosphate of inositol 1,4,5-trisphosphate to inositol 1,4-bisphosphate, and inositol 1,3,4,5-tetrasphosphate to inositol 1,3,4-trisphosphate. Plays a crucial role in the survival of cerebellar Purkinje cells. The sequence is that of Inositol polyphosphate-5-phosphatase A (Inpp5a) from Mus musculus (Mouse).